A 246-amino-acid chain; its full sequence is Envelope glycoprotein gp95 (246 aa).

Residues 1–192 (IPSRPVGGPC…EWAVHLLKGL (192 aa)) lie on the Extracellular side of the membrane. Asn31 carries N-linked (GlcNAc...) asparagine; by host glycosylation. Cys50 and Cys86 are disulfide-bonded. Positions 58–78 (GPTARIFASILAPGVAAAQAL) are fusion peptide. A coiled-coil region spans residues 75–125 (AQALKEIERLACWSVKQANLTTSLLGDLLDDVTSIRHAVLQNRAAIDFLLL). Asn93 carries N-linked (GlcNAc...) asparagine; by host glycosylation. The interval 114–130 (LQNRAAIDFLLLAHGHG) is immunosuppression. Cys131 and Cys138 are disulfide-bonded. Asn141 carries an N-linked (GlcNAc...) asparagine; by host glycan. Positions 143–173 (SDHSESIQKKFQLMKEHVNKIGVDSDPIGSW) form a coiled coil. Residues 193–213 (LLGLVVILLLVVCLPCLLQIV) form a helical membrane-spanning segment. Residues Cys205 and Cys208 are each lipidated (S-palmitoyl cysteine; by host). Topologically, residues 214–246 (CGNIRKMINNSISYHTEYKKLQKAYGQPESRIV) are cytoplasmic.

Belongs to the Alpharetroviruses envelope glycoprotein family. Heterodimer with the transmembrane protein. The mature envelope protein (Env) consists of a trimer of SU-TM heterodimers attached by a labile interchain disulfide bond. In terms of assembly, heterodimer with the surface protein. The mature envelope protein (Env) consists of a trimer of SU-TM heterodimers attached by a labile interchain disulfide bond. Specific enzymatic cleavages in vivo yield mature proteins. Envelope glycoproteins are synthesized as an inactive precursor that is N-glycosylated and processed likely by host cell furin or by a furin-like protease in the Golgi to yield the mature SU and TM proteins. The cleavage site between SU and TM requires the minimal sequence [KR]-X-[KR]-R. In terms of processing, the transmembrane protein is palmitoylated. Palmitoylation is necessary for glycoprotein function and infectivity.

Its subcellular location is the virion membrane. It is found in the host cell membrane. Functionally, the surface protein (SU) attaches the virus to the host cell by binding to its receptor. This interaction triggers the refolding of the transmembrane protein (TM) thereby unmasking its fusion peptide and the formation of a reactive thiolate to activate its fusogenic potential. Fusion occurs at the host cell plasma membrane. The transmembrane protein (TM) acts as a class I viral fusion protein. Under the current model, the protein has at least 3 conformational states: pre-fusion native state, pre-hairpin intermediate state, and post-fusion hairpin state. During viral and target cell membrane fusion, the coiled coil regions (heptad repeats) assume a trimer-of-hairpins structure, positioning the fusion peptide in close proximity to the C-terminal region of the ectodomain. The formation of this structure appears to drive apposition and subsequent fusion of viral and target cell membranes. Membranes fusion leads to delivery of the nucleocapsid into the cytoplasm. The protein is Envelope glycoprotein gp95 (env) of Galliformes.